A 303-amino-acid chain; its full sequence is MITIFNKLKQSLSKTSNTISTGIDKIFYKKKLDQTTLNELEELLISSDISITVVTHIIEKFKNVKFDKTIDSDTVKEAIAKLIEQQLSKSEIPFTLSENKLNIILICGVNGVGKTTTIGKLSALYSAQGKKVAVAACDTFRAAAINQLSSWVDRANALLITGEVSADPASVAYRAIQESIKQNIDILFIDTAGRLHNNKNLMDELSKIVKVIKKLDENAPTHSILIIDAVTGQNTYNQIEYFNDVTNLTGLIITKLDGSAKAGVLVGAVQKFNLPIYFIGIGEQIEDLKIFNRHDFSRSLVGL.

GTP-binding positions include 108 to 115 (GVNGVGKT), 190 to 194 (DTAGR), and 254 to 257 (TKLD).

This sequence belongs to the GTP-binding SRP family. FtsY subfamily. Part of the signal recognition particle protein translocation system, which is composed of SRP and FtsY. SRP is a ribonucleoprotein composed of Ffh and a 4.5S RNA molecule.

The protein localises to the cell inner membrane. It is found in the cytoplasm. It carries out the reaction GTP + H2O = GDP + phosphate + H(+). Involved in targeting and insertion of nascent membrane proteins into the cytoplasmic membrane. Acts as a receptor for the complex formed by the signal recognition particle (SRP) and the ribosome-nascent chain (RNC). Interaction with SRP-RNC leads to the transfer of the RNC complex to the Sec translocase for insertion into the membrane, the hydrolysis of GTP by both Ffh and FtsY, and the dissociation of the SRP-FtsY complex into the individual components. This chain is Signal recognition particle receptor FtsY, found in Rickettsia typhi (strain ATCC VR-144 / Wilmington).